A 499-amino-acid chain; its full sequence is Probable cytosol aminopeptidase (499 aa).

The Mn(2+) site is built by Lys269 and Asp274. Lys281 is a catalytic residue. Residues Asp292, Asp351, and Glu353 each coordinate Mn(2+). The active site involves Arg355.

Belongs to the peptidase M17 family. The cofactor is Mn(2+).

Its subcellular location is the cytoplasm. The enzyme catalyses Release of an N-terminal amino acid, Xaa-|-Yaa-, in which Xaa is preferably Leu, but may be other amino acids including Pro although not Arg or Lys, and Yaa may be Pro. Amino acid amides and methyl esters are also readily hydrolyzed, but rates on arylamides are exceedingly low.. The catalysed reaction is Release of an N-terminal amino acid, preferentially leucine, but not glutamic or aspartic acids.. In terms of biological role, presumably involved in the processing and regular turnover of intracellular proteins. Catalyzes the removal of unsubstituted N-terminal amino acids from various peptides. In Actinobacillus pleuropneumoniae serotype 3 (strain JL03), this protein is Probable cytosol aminopeptidase.